A 96-amino-acid chain; its full sequence is MKLLQVLLVLLFVALADGAQPKRCFSNVEGYCRKKCRLVEISEMGCLHGKYCCVNELENKKHKKHSVVEETVKLQDKSKVQDYMILPTVTYYTISI.

The first 21 residues, 1–21 (MKLLQVLLVLLFVALADGAQP), serve as a signal peptide directing secretion. Disulfide bonds link C24/C52, C32/C46, and C36/C53.

It belongs to the beta-defensin family.

The protein resides in the secreted. In terms of biological role, has antibacterial activity. This Mus musculus (Mouse) protein is Beta-defensin 20 (Defb20).